Reading from the N-terminus, the 55-residue chain is Large ribosomal subunit protein bL33 (55 aa).

It belongs to the bacterial ribosomal protein bL33 family.

The protein is Large ribosomal subunit protein bL33 of Zymomonas mobilis subsp. mobilis (strain ATCC 31821 / ZM4 / CP4).